We begin with the raw amino-acid sequence, 428 residues long: 3-phosphoshikimate 1-carboxyvinyltransferase (428 aa).

3 residues coordinate 3-phosphoshikimate: lysine 23, serine 24, and arginine 28. Lysine 23 contacts phosphoenolpyruvate. Residues glycine 97 and arginine 125 each contribute to the phosphoenolpyruvate site. Serine 170, serine 171, glutamine 172, serine 198, aspartate 314, asparagine 337, and lysine 341 together coordinate 3-phosphoshikimate. Glutamine 172 is a binding site for phosphoenolpyruvate. The active-site Proton acceptor is the aspartate 314. Phosphoenolpyruvate contacts are provided by arginine 345, arginine 387, and lysine 412.

It belongs to the EPSP synthase family. In terms of assembly, monomer.

The protein localises to the cytoplasm. It carries out the reaction 3-phosphoshikimate + phosphoenolpyruvate = 5-O-(1-carboxyvinyl)-3-phosphoshikimate + phosphate. The protein operates within metabolic intermediate biosynthesis; chorismate biosynthesis; chorismate from D-erythrose 4-phosphate and phosphoenolpyruvate: step 6/7. Catalyzes the transfer of the enolpyruvyl moiety of phosphoenolpyruvate (PEP) to the 5-hydroxyl of shikimate-3-phosphate (S3P) to produce enolpyruvyl shikimate-3-phosphate and inorganic phosphate. This Serratia proteamaculans (strain 568) protein is 3-phosphoshikimate 1-carboxyvinyltransferase.